We begin with the raw amino-acid sequence, 328 residues long: 7,8-didemethyl-8-hydroxy-5-deazariboflavin synthase (328 aa).

One can recognise a Radical SAM core domain in the interval 1-242 (MTYSRNIFIP…PDVSIQVPPN (242 aa)). Positions 15, 19, and 22 each coordinate [4Fe-4S] cluster.

This sequence belongs to the radical SAM superfamily. CofG family. In terms of assembly, consists of two subunits, CofG and CofH. [4Fe-4S] cluster serves as cofactor.

It catalyses the reaction 5-amino-5-(4-hydroxybenzyl)-6-(D-ribitylimino)-5,6-dihydrouracil + S-adenosyl-L-methionine = 7,8-didemethyl-8-hydroxy-5-deazariboflavin + 5'-deoxyadenosine + L-methionine + NH4(+) + H(+). It participates in cofactor biosynthesis; coenzyme F0 biosynthesis. Functionally, catalyzes the radical-mediated synthesis of 7,8-didemethyl-8-hydroxy-5-deazariboflavin from 5-amino-5-(4-hydroxybenzyl)-6-(D-ribitylimino)-5,6-dihydrouracil. The chain is 7,8-didemethyl-8-hydroxy-5-deazariboflavin synthase from Methanothermobacter thermautotrophicus (strain ATCC 29096 / DSM 1053 / JCM 10044 / NBRC 100330 / Delta H) (Methanobacterium thermoautotrophicum).